A 60-amino-acid polypeptide reads, in one-letter code: MAVQQNKKSPSKRGMHRSHNALTVPGIAVESTTGETHLRHHISPTGFYRGRKVLKTKSEA.

Residues 1–60 (MAVQQNKKSPSKRGMHRSHNALTVPGIAVESTTGETHLRHHISPTGFYRGRKVLKTKSEA) form a disordered region. Composition is skewed to basic residues over residues 9 to 19 (SPSKRGMHRSH) and 49 to 60 (RGRKVLKTKSEA).

It belongs to the bacterial ribosomal protein bL32 family.

In Polaromonas sp. (strain JS666 / ATCC BAA-500), this protein is Large ribosomal subunit protein bL32.